Consider the following 823-residue polypeptide: MSDRGKCQYPDDVDVIREREYPLLKDTTYLDHAGTTLYAKSLIESFSRDLTSNLYGNPHSMSAPSQLSTQRVDDIRLRALRFFSADPEEFDLVFVANATAAIKLVADSFRESTPQGFWYGYHVDSHTSLVGARELAGIGSRCFVTDAEVESWISQLDTEPVQGPRLFAYPAQSNMNGRRFPRGWCGRIRESAKDTYTLLDVASLVSTSPFDLSDASAAPDFAVLSFYKIFGFPDLGALIVRKSAGHIFDKRKFFGGGTVDMVLTQGTQWHAKKQSSIHERLEDGTLPFHNIIALGSAFDTHERLFGSMDNISSHTRFLAKRLYDRMTTLRHYNGESVCHVYKPSHSDYTDPSTQGPILAFNLRSSQGAWIGKSEVEKMASVRNIQIRSGTLCNPGGTAASLNWSGADMLRHFGAGMRCGDDHDIMDGRPTGILRVSLGAMSNLTDIDTFMGFIEEFYVEKSPNVCALVPPLEANLTHRSGFHVESLSVYPIKSCGAFKVPDGKRWEIRREGLVWDREWCLIHQGTGTALNQKRYPRMALIRPFIDLSHGVLRVTCGSIRSPSQKTLEIPLDRENSNLTTTSLCQNSSKPSTVCGDQVIVQAYSSPTVSAFFSDFLGVPCTLARFPPQSSTRLAEPRRGLGSRKSPLRPAMPGAFPQDTPTPEAERNPILLSNESPILLISRSSVNRLNETIKSSPTTTNSTGRKKAVAADVFRANIVVAEDFPQPVSAGRPYIEDHWESLRIGPDNLHFNVLGSCQRCQMVCVDQLTGVRGEEPYSTLAKTRKSGNKIYFGRHLAISSNGDGNSVNSRTVMVGDVVTPSYYGP.

Lys228 is modified (N6-(pyridoxal phosphate)lysine). Cys392 is a catalytic residue. Residues 628–667 (SSTRLAEPRRGLGSRKSPLRPAMPGAFPQDTPTPEAERNP) form a disordered region. An MOSC domain is found at 644–819 (SPLRPAMPGA…VMVGDVVTPS (176 aa)).

It belongs to the class-V pyridoxal-phosphate-dependent aminotransferase family. MOCOS subfamily. The cofactor is pyridoxal 5'-phosphate.

The catalysed reaction is Mo-molybdopterin + L-cysteine + AH2 = thio-Mo-molybdopterin + L-alanine + A + H2O. Its pathway is cofactor biosynthesis; molybdopterin biosynthesis. Its function is as follows. Sulfurates the molybdenum cofactor. Sulfation of molybdenum is essential for xanthine dehydrogenase (XDH) and aldehyde oxidase (ADO) enzymes in which molybdenum cofactor is liganded by 1 oxygen and 1 sulfur atom in active form. In Aspergillus niger (strain ATCC MYA-4892 / CBS 513.88 / FGSC A1513), this protein is Molybdenum cofactor sulfurase.